The chain runs to 257 residues: Imidazole glycerol phosphate synthase subunit HisF (257 aa).

Residues aspartate 12 and aspartate 131 contribute to the active site.

This sequence belongs to the HisA/HisF family. In terms of assembly, heterodimer of HisH and HisF.

It is found in the cytoplasm. The catalysed reaction is 5-[(5-phospho-1-deoxy-D-ribulos-1-ylimino)methylamino]-1-(5-phospho-beta-D-ribosyl)imidazole-4-carboxamide + L-glutamine = D-erythro-1-(imidazol-4-yl)glycerol 3-phosphate + 5-amino-1-(5-phospho-beta-D-ribosyl)imidazole-4-carboxamide + L-glutamate + H(+). It participates in amino-acid biosynthesis; L-histidine biosynthesis; L-histidine from 5-phospho-alpha-D-ribose 1-diphosphate: step 5/9. In terms of biological role, IGPS catalyzes the conversion of PRFAR and glutamine to IGP, AICAR and glutamate. The HisF subunit catalyzes the cyclization activity that produces IGP and AICAR from PRFAR using the ammonia provided by the HisH subunit. The sequence is that of Imidazole glycerol phosphate synthase subunit HisF from Burkholderia lata (strain ATCC 17760 / DSM 23089 / LMG 22485 / NCIMB 9086 / R18194 / 383).